A 78-amino-acid polypeptide reads, in one-letter code: UPF0270 protein PC1_3850 (78 aa).

This sequence belongs to the UPF0270 family.

In Pectobacterium carotovorum subsp. carotovorum (strain PC1), this protein is UPF0270 protein PC1_3850.